We begin with the raw amino-acid sequence, 296 residues long: UDP-N-acetylenolpyruvoylglucosamine reductase (296 aa).

The FAD-binding PCMH-type domain occupies Leu-18 to Gly-189. Arg-166 is an active-site residue. Cys-218 acts as the Proton donor in catalysis. Glu-289 is an active-site residue.

This sequence belongs to the MurB family. FAD is required as a cofactor.

It is found in the cytoplasm. It catalyses the reaction UDP-N-acetyl-alpha-D-muramate + NADP(+) = UDP-N-acetyl-3-O-(1-carboxyvinyl)-alpha-D-glucosamine + NADPH + H(+). The protein operates within cell wall biogenesis; peptidoglycan biosynthesis. In terms of biological role, cell wall formation. The polypeptide is UDP-N-acetylenolpyruvoylglucosamine reductase (Nitratidesulfovibrio vulgaris (strain ATCC 29579 / DSM 644 / CCUG 34227 / NCIMB 8303 / VKM B-1760 / Hildenborough) (Desulfovibrio vulgaris)).